We begin with the raw amino-acid sequence, 144 residues long: Succinate dehydrogenase cytochrome b560 subunit (144 aa).

Helical transmembrane passes span 40-60 (IFHR…ILIL), 84-104 (GFLF…HLFA), and 124-144 (LTGY…WIIF). H101 provides a ligand contact to heme.

It belongs to the cytochrome b560 family. Forms part of complex II containing four subunits: a 70 kDa flavoprotein (FP), a 27 kDa iron-sulfur protein (IP), a cytochrome B and a membrane-anchoring protein. Requires heme as cofactor.

Its subcellular location is the mitochondrion inner membrane. It participates in carbohydrate metabolism; tricarboxylic acid cycle. Its function is as follows. Membrane-anchoring subunit of succinate dehydrogenase (SDH) that is involved in complex II of the mitochondrial electron transport chain and is responsible for transferring electrons from succinate to ubiquinone (coenzyme Q). This is Succinate dehydrogenase cytochrome b560 subunit (SDH3) from Reclinomonas americana.